A 250-amino-acid chain; its full sequence is Ditrans,polycis-undecaprenyl-diphosphate synthase ((2E,6E)-farnesyl-diphosphate specific) (250 aa).

Residue aspartate 27 is part of the active site. Mg(2+) is bound at residue aspartate 27. Substrate is bound by residues 28 to 31 (GNGR), tryptophan 32, arginine 40, histidine 44, and 72 to 74 (SSE). Asparagine 75 (proton acceptor) is an active-site residue. Substrate contacts are provided by tryptophan 76, arginine 78, and arginine 195. Mg(2+) is bound at residue histidine 200. Residue 201–203 (RIS) coordinates substrate. Glutamate 214 lines the Mg(2+) pocket.

The protein belongs to the UPP synthase family. As to quaternary structure, homodimer. Mg(2+) is required as a cofactor.

The enzyme catalyses 8 isopentenyl diphosphate + (2E,6E)-farnesyl diphosphate = di-trans,octa-cis-undecaprenyl diphosphate + 8 diphosphate. Catalyzes the sequential condensation of isopentenyl diphosphate (IPP) with (2E,6E)-farnesyl diphosphate (E,E-FPP) to yield (2Z,6Z,10Z,14Z,18Z,22Z,26Z,30Z,34E,38E)-undecaprenyl diphosphate (di-trans,octa-cis-UPP). UPP is the precursor of glycosyl carrier lipid in the biosynthesis of bacterial cell wall polysaccharide components such as peptidoglycan and lipopolysaccharide. This is Ditrans,polycis-undecaprenyl-diphosphate synthase ((2E,6E)-farnesyl-diphosphate specific) from Blochmanniella floridana.